A 151-amino-acid chain; its full sequence is Small ribosomal subunit protein uS19 (151 aa).

It belongs to the universal ribosomal protein uS19 family.

In Picea mariana (Black spruce), this protein is Small ribosomal subunit protein uS19 (RPS15).